A 261-amino-acid chain; its full sequence is Thiamine thiazole synthase (261 aa).

Residues Ser-40, 59–60 (ER), Gly-67, Val-133, and 159–161 (HID) contribute to the NAD(+) site. Fe cation contacts are provided by Asp-161 and His-176. Residues Ser-179 and Met-226 each coordinate NAD(+). Position 236 (Arg-236) interacts with glycine.

It belongs to the THI4 family. As to quaternary structure, homooctamer; tetramer of dimers. It depends on Fe(2+) as a cofactor.

It carries out the reaction hydrogen sulfide + glycine + NAD(+) = ADP-5-ethyl-4-methylthiazole-2-carboxylate + nicotinamide + 3 H2O + H(+). Its pathway is cofactor biosynthesis; thiamine diphosphate biosynthesis. Functionally, involved in the biosynthesis of the thiazole moiety of thiamine. Catalyzes the conversion of NAD and glycine to adenosine diphosphate 5-(2-hydroxyethyl)-4-methylthiazole-2-carboxylate (ADT), an adenylated thiazole intermediate, using free sulfide as a source of sulfur. This is Thiamine thiazole synthase from Methanococcus maripaludis (strain C6 / ATCC BAA-1332).